A 142-amino-acid polypeptide reads, in one-letter code: Large ribosomal subunit protein uL16 (142 aa).

This sequence belongs to the universal ribosomal protein uL16 family. In terms of assembly, part of the 50S ribosomal subunit.

Binds 23S rRNA and is also seen to make contacts with the A and possibly P site tRNAs. This Thermotoga sp. (strain RQ2) protein is Large ribosomal subunit protein uL16.